A 96-amino-acid polypeptide reads, in one-letter code: DNA-directed RNA polymerase subunit Rpo11 (96 aa).

It belongs to the archaeal Rpo11/eukaryotic RPB11/RPC19 RNA polymerase subunit family. Part of the RNA polymerase complex.

It is found in the cytoplasm. It catalyses the reaction RNA(n) + a ribonucleoside 5'-triphosphate = RNA(n+1) + diphosphate. Its function is as follows. DNA-dependent RNA polymerase (RNAP) catalyzes the transcription of DNA into RNA using the four ribonucleoside triphosphates as substrates. The sequence is that of DNA-directed RNA polymerase subunit Rpo11 from Methanococcus maripaludis (strain DSM 14266 / JCM 13030 / NBRC 101832 / S2 / LL).